We begin with the raw amino-acid sequence, 629 residues long: Myotonin-protein kinase (629 aa).

Topologically, residues Met1–Ser590 are cytoplasmic. The Protein kinase domain occupies Phe71–Phe339. Residues Ile77 to Val85 and Lys100 each bind ATP. Asp195 (proton acceptor) is an active-site residue. 2 positions are modified to phosphoserine; by autocatalysis: Ser216 and Ser228. The residue at position 234 (Thr234) is a Phosphothreonine; by autocatalysis. The AGC-kinase C-terminal domain maps to Phe340–Val415. The stretch at Val457–Thr536 forms a coiled coil. The helical; Anchor for type IV membrane protein transmembrane segment at Leu591–Ala611 threads the bilayer. Residues His612–Pro629 lie on the Lumenal side of the membrane.

Belongs to the protein kinase superfamily. AGC Ser/Thr protein kinase family. DMPK subfamily. As to quaternary structure, homodimer; homodimerization stimulates the kinase activity. Interacts with HSPB2; may enhance DMPK kinase activity. Interacts with PLN; phosphorylates PLN. May interact with RAC1; may regulate DMPK kinase activity. Interacts with LMNA; may regulate nuclear envelope stability. It depends on Mg(2+) as a cofactor. In terms of processing, phosphorylated. Autophosphorylates. Phosphorylation by RAF1 may result in activation of DMPK. Proteolytic processing of the C-terminus may remove the transmembrane domain and release the kinase from membranes stimulating its activity. In terms of tissue distribution, most isoforms are expressed in many tissues including heart, skeletal muscle, liver and brain, except for isoform 2 which is only found in the heart and skeletal muscle, and isoform 14 which is only found in the brain, with high levels in the striatum, cerebellar cortex and pons.

Its subcellular location is the endoplasmic reticulum membrane. It localises to the nucleus outer membrane. The protein localises to the mitochondrion outer membrane. It is found in the sarcoplasmic reticulum membrane. The protein resides in the cell membrane. Its subcellular location is the cytoplasm. It localises to the cytosol. The protein localises to the mitochondrion membrane. The enzyme catalyses L-seryl-[protein] + ATP = O-phospho-L-seryl-[protein] + ADP + H(+). The catalysed reaction is L-threonyl-[protein] + ATP = O-phospho-L-threonyl-[protein] + ADP + H(+). With respect to regulation, coiled-coil-mediated oligomerization enhances the catalytic activity. Proteolytic processing of the C-terminus may release the protein from membranes and constitute a mean to regulate the enzyme. May be regulated by HSPB2, RAC1, RAF1 and G-protein second messengers. In terms of biological role, non-receptor serine/threonine protein kinase which is necessary for the maintenance of skeletal muscle structure and function. May play a role in myocyte differentiation and survival by regulating the integrity of the nuclear envelope and the expression of muscle-specific genes. May also phosphorylate PPP1R12A and inhibit the myosin phosphatase activity to regulate myosin phosphorylation. Also critical to the modulation of cardiac contractility and to the maintenance of proper cardiac conduction activity probably through the regulation of cellular calcium homeostasis. Phosphorylates PLN, a regulator of calcium pumps and may regulate sarcoplasmic reticulum calcium uptake in myocytes. May also phosphorylate FXYD1/PLM which is able to induce chloride currents. May also play a role in synaptic plasticity. This is Myotonin-protein kinase (DMPK) from Homo sapiens (Human).